Consider the following 444-residue polypeptide: Tol-Pal system protein TolB (444 aa).

Residues 1-19 form the signal peptide; it reads MRNIIYFILSLLFSVTSYA.

It belongs to the TolB family. The Tol-Pal system is composed of five core proteins: the inner membrane proteins TolA, TolQ and TolR, the periplasmic protein TolB and the outer membrane protein Pal. They form a network linking the inner and outer membranes and the peptidoglycan layer.

The protein localises to the periplasm. Its function is as follows. Part of the Tol-Pal system, which plays a role in outer membrane invagination during cell division and is important for maintaining outer membrane integrity. The chain is Tol-Pal system protein TolB from Rickettsia rickettsii (strain Iowa).